The sequence spans 181 residues: MQQWLEIGKVVAAQGLRGEVRVQPATDFAERLTRPGARLVGRSLDDGRVFRLQSGRAIPGKDLFVCRFEGVEERNAAEKLVGSTLWIGAAERPVLAAGEFWLPDLMGVRVFRQDTGEAIGEVSDMTRAGNDLLVIRLSGGKTVMVPFVHALVPVVDLEAGRIEVVAIPGLLDPEAAEADEA.

A PRC barrel domain is found at 97-170 (AGEFWLPDLM…RIEVVAIPGL (74 aa)).

This sequence belongs to the RimM family. In terms of assembly, binds ribosomal protein uS19.

Its subcellular location is the cytoplasm. An accessory protein needed during the final step in the assembly of 30S ribosomal subunit, possibly for assembly of the head region. Essential for efficient processing of 16S rRNA. May be needed both before and after RbfA during the maturation of 16S rRNA. It has affinity for free ribosomal 30S subunits but not for 70S ribosomes. The protein is Ribosome maturation factor RimM of Gloeobacter violaceus (strain ATCC 29082 / PCC 7421).